A 214-amino-acid polypeptide reads, in one-letter code: Tungstate uptake system ATP-binding protein TupC (214 aa).

Residues I3–F214 enclose the ABC transporter domain. Residue G35–T42 participates in ATP binding.

Belongs to the ABC transporter superfamily. As to quaternary structure, the complex is composed of two ATP-binding proteins (TupC), two transmembrane proteins (TupB) and a solute-binding protein (TupA).

The catalysed reaction is tungstate(in) + ATP + H2O = tungstate(out) + ADP + phosphate + H(+). In terms of biological role, part of an ABC transporter complex involved in tungstate uptake. Probably responsible for energy coupling to the transport system. In Peptoclostridium acidaminophilum (Eubacterium acidaminophilum), this protein is Tungstate uptake system ATP-binding protein TupC.